A 652-amino-acid chain; its full sequence is Regulator of DNA class I crossover intermediates 1 (652 aa).

Residues 1–228 (MNWVGGSRSR…APYKRTNSSE (228 aa)) constitute a DNA-binding region (binds DNA containing a D-loop). 2 disordered regions span residues 464 to 512 (YLES…KATE) and 621 to 652 (EKES…SNSL). The span at 467–477 (SSQSSQSASYS) shows a compositional bias: low complexity. Composition is skewed to polar residues over residues 478–491 (PRPT…STDL) and 639–652 (DTTG…SNSL).

In terms of assembly, interacts with MSH5. Interacts with TEX11. Expressed mainly in testis (at protein level). Expressed in spermatogonia and enriched in spermatocytes; absent in testicular somatic cells (at protein level). No expression or low levels in other tissues.

The protein resides in the chromosome. Involved in recombination, probably acting by stabilizing recombination intermediates during meiotic crossover formation. Required for normal germline development and fertility. Required for meiotic progression, complete chromosomal synapsis and crossover formation. Binds double-stranded DNA. However, also binds branched DNA molecules, such as those containing a D-loop or Holliday junction structure. Probably not required for formation of DNA double-strand breaks (DSBs). Also binds RNA in an RNA structure-independent manner, with a preference for binding 3'-UTR regions of mRNAs; may stabilize bound RNAs. In Mus musculus (Mouse), this protein is Regulator of DNA class I crossover intermediates 1.